The sequence spans 323 residues: Elongation factor P--(R)-beta-lysine ligase (323 aa).

Residue 74–76 (SPE) participates in substrate binding. ATP contacts are provided by residues 98-100 (RNE) and Asn-107. Residue Tyr-116 coordinates substrate. 242–243 (EL) lines the ATP pocket. Substrate is bound at residue Glu-249. ATP is bound at residue Gly-298.

This sequence belongs to the class-II aminoacyl-tRNA synthetase family. EpmA subfamily. In terms of assembly, homodimer.

The enzyme catalyses D-beta-lysine + L-lysyl-[protein] + ATP = N(6)-((3R)-3,6-diaminohexanoyl)-L-lysyl-[protein] + AMP + diphosphate + H(+). In terms of biological role, with EpmB is involved in the beta-lysylation step of the post-translational modification of translation elongation factor P (EF-P). Catalyzes the ATP-dependent activation of (R)-beta-lysine produced by EpmB, forming a lysyl-adenylate, from which the beta-lysyl moiety is then transferred to the epsilon-amino group of a conserved specific lysine residue in EF-P. The chain is Elongation factor P--(R)-beta-lysine ligase from Vibrio campbellii (strain ATCC BAA-1116).